The sequence spans 443 residues: Tubulin beta-1 chain (443 aa).

8 residues coordinate GTP: Gln11, Glu69, Ser138, Gly142, Thr143, Gly144, Asn204, and Asn226. Residue Glu69 coordinates Mg(2+). The tract at residues 424–443 is disordered; that stretch reads QYQDATAEREGEYEEDYDEA. Positions 434–443 are enriched in acidic residues; it reads GEYEEDYDEA.

It belongs to the tubulin family. In terms of assembly, dimer of alpha and beta chains. A typical microtubule is a hollow water-filled tube with an outer diameter of 25 nm and an inner diameter of 15 nM. Alpha-beta heterodimers associate head-to-tail to form protofilaments running lengthwise along the microtubule wall with the beta-tubulin subunit facing the microtubule plus end conferring a structural polarity. Microtubules usually have 13 protofilaments but different protofilament numbers can be found in some organisms and specialized cells. Mg(2+) is required as a cofactor.

It is found in the cytoplasm. The protein localises to the cytoskeleton. In terms of biological role, tubulin is the major constituent of microtubules, a cylinder consisting of laterally associated linear protofilaments composed of alpha- and beta-tubulin heterodimers. Microtubules grow by the addition of GTP-tubulin dimers to the microtubule end, where a stabilizing cap forms. Below the cap, tubulin dimers are in GDP-bound state, owing to GTPase activity of alpha-tubulin. The polypeptide is Tubulin beta-1 chain (TUBB1) (Anemia phyllitidis (Fern)).